A 303-amino-acid chain; its full sequence is Recombination-associated protein RdgC (303 aa).

This sequence belongs to the RdgC family.

Its subcellular location is the cytoplasm. It is found in the nucleoid. In terms of biological role, may be involved in recombination. The protein is Recombination-associated protein RdgC of Yersinia enterocolitica serotype O:8 / biotype 1B (strain NCTC 13174 / 8081).